A 233-amino-acid chain; its full sequence is Thymidylate kinase (233 aa).

10–17 (GVDGVGKT) provides a ligand contact to ATP.

This sequence belongs to the thymidylate kinase family.

The catalysed reaction is dTMP + ATP = dTDP + ADP. In terms of biological role, phosphorylation of dTMP to form dTDP in both de novo and salvage pathways of dTTP synthesis. The protein is Thymidylate kinase of Bifidobacterium longum subsp. infantis (strain ATCC 15697 / DSM 20088 / JCM 1222 / NCTC 11817 / S12).